The following is an 85-amino-acid chain: Small ribosomal subunit protein uS17 (85 aa).

Belongs to the universal ribosomal protein uS17 family. Part of the 30S ribosomal subunit.

In terms of biological role, one of the primary rRNA binding proteins, it binds specifically to the 5'-end of 16S ribosomal RNA. This Mycoplasmoides gallisepticum (strain R(low / passage 15 / clone 2)) (Mycoplasma gallisepticum) protein is Small ribosomal subunit protein uS17.